The chain runs to 479 residues: Aspartyl/glutamyl-tRNA(Asn/Gln) amidotransferase subunit B (479 aa).

The protein belongs to the GatB/GatE family. GatB subfamily. Heterotrimer of A, B and C subunits.

It carries out the reaction L-glutamyl-tRNA(Gln) + L-glutamine + ATP + H2O = L-glutaminyl-tRNA(Gln) + L-glutamate + ADP + phosphate + H(+). The catalysed reaction is L-aspartyl-tRNA(Asn) + L-glutamine + ATP + H2O = L-asparaginyl-tRNA(Asn) + L-glutamate + ADP + phosphate + 2 H(+). Functionally, allows the formation of correctly charged Asn-tRNA(Asn) or Gln-tRNA(Gln) through the transamidation of misacylated Asp-tRNA(Asn) or Glu-tRNA(Gln) in organisms which lack either or both of asparaginyl-tRNA or glutaminyl-tRNA synthetases. The reaction takes place in the presence of glutamine and ATP through an activated phospho-Asp-tRNA(Asn) or phospho-Glu-tRNA(Gln). The polypeptide is Aspartyl/glutamyl-tRNA(Asn/Gln) amidotransferase subunit B (Geobacter sulfurreducens (strain ATCC 51573 / DSM 12127 / PCA)).